The chain runs to 526 residues: Probable feruloyl esterase B-2 (526 aa).

An N-terminal signal peptide occupies residues 1 to 18; sequence MTKLSLLPLLALASAVLA. Intrachain disulfides connect Cys-27–Cys-74 and Cys-62–Cys-113. Residues Asn-52, Asn-97, and Asn-137 are each glycosylated (N-linked (GlcNAc...) asparagine). Intrachain disulfides connect Cys-186-Cys-441, Cys-255-Cys-272, Cys-281-Cys-291, and Cys-503-Cys-525. The active-site Acyl-ester intermediate is Ser-187. An N-linked (GlcNAc...) asparagine glycan is attached at Asn-233. 5 residues coordinate Ca(2+): Asp-256, Asp-259, Ala-261, Asp-263, and Ile-265. Asn-311 carries N-linked (GlcNAc...) asparagine glycosylation. Residues Asp-400 and His-440 each act as charge relay system in the active site. Residue Asn-516 is glycosylated (N-linked (GlcNAc...) asparagine).

The protein belongs to the tannase family.

The protein resides in the secreted. It carries out the reaction feruloyl-polysaccharide + H2O = ferulate + polysaccharide.. Its function is as follows. Involved in degradation of plant cell walls. Hydrolyzes the feruloyl-arabinose ester bond in arabinoxylans as well as the feruloyl-galactose and feruloyl-arabinose ester bonds in pectin. The polypeptide is Probable feruloyl esterase B-2 (faeB-2) (Neosartorya fischeri (strain ATCC 1020 / DSM 3700 / CBS 544.65 / FGSC A1164 / JCM 1740 / NRRL 181 / WB 181) (Aspergillus fischerianus)).